We begin with the raw amino-acid sequence, 362 residues long: MNSFGIRFKFTSFGESHGQAIGCVIDGMPAGVKFDFDFLQEMLDKRKPGQNKFSTPRKEEDKAQVLSGVFEGYTTGTPISVLVYNENTRSKDYEKDVFRPAHADFTYYHKYGIRDYRGGGRASARESIARVAAGALAQMLLKEFDIEIMSGVFGVGSIDSKLSNDEFDFNCAKNSEVYALDKNLEQSFKDEILKAKKAKDSIGARVFTRVKNPIKGLGEPLYDKLDSKLAHAIMGVNAVKAIEIGSGIQSSYMYGSQNNDELKDGVFLSNHSGGILGGISNGGFIDIKTYFKPTPSIFLPQQTQNIQGENIIRELKGRHDPCVGIRGSIVVNAMVAICMADALLLNASSNLQNLQRVYGKNK.

Residue R46 participates in NADP(+) binding. FMN contacts are provided by residues 121-123 (RAS), 237-238 (NA), G277, 292-296 (KPTPS), and R318.

The protein belongs to the chorismate synthase family. As to quaternary structure, homotetramer. Requires FMNH2 as cofactor.

The enzyme catalyses 5-O-(1-carboxyvinyl)-3-phosphoshikimate = chorismate + phosphate. It participates in metabolic intermediate biosynthesis; chorismate biosynthesis; chorismate from D-erythrose 4-phosphate and phosphoenolpyruvate: step 7/7. Catalyzes the anti-1,4-elimination of the C-3 phosphate and the C-6 proR hydrogen from 5-enolpyruvylshikimate-3-phosphate (EPSP) to yield chorismate, which is the branch point compound that serves as the starting substrate for the three terminal pathways of aromatic amino acid biosynthesis. This reaction introduces a second double bond into the aromatic ring system. In Campylobacter lari (strain RM2100 / D67 / ATCC BAA-1060), this protein is Chorismate synthase.